The primary structure comprises 354 residues: S-adenosylmethionine:tRNA ribosyltransferase-isomerase (354 aa).

This sequence belongs to the QueA family. As to quaternary structure, monomer.

Its subcellular location is the cytoplasm. The enzyme catalyses 7-aminomethyl-7-carbaguanosine(34) in tRNA + S-adenosyl-L-methionine = epoxyqueuosine(34) in tRNA + adenine + L-methionine + 2 H(+). It functions in the pathway tRNA modification; tRNA-queuosine biosynthesis. Its function is as follows. Transfers and isomerizes the ribose moiety from AdoMet to the 7-aminomethyl group of 7-deazaguanine (preQ1-tRNA) to give epoxyqueuosine (oQ-tRNA). This Pseudomonas syringae pv. tomato (strain ATCC BAA-871 / DC3000) protein is S-adenosylmethionine:tRNA ribosyltransferase-isomerase.